The sequence spans 145 residues: Large ribosomal subunit protein bL9 (145 aa).

It belongs to the bacterial ribosomal protein bL9 family.

Functionally, binds to the 23S rRNA. This Mesomycoplasma hyopneumoniae (strain 7448) (Mycoplasma hyopneumoniae) protein is Large ribosomal subunit protein bL9.